The chain runs to 468 residues: uncharacterized protein (468 aa).

Coiled coils occupy residues 10 to 94 (NEAL…VKEL) and 147 to 279 (FVEL…EASI). The segment at 324 to 369 (TPRTVDPIPEGTIIKKESSDDAMFSGLKKSKPKKSNKSNNNQADSD) is disordered. Serine 342 is modified (phosphoserine). Positions 399–445 (VEQLKSRIAHFKEQQDSVTKQRIEKAKQEIEKLEAKYNSKEEKTLTE) form a coiled coil.

It is found in the cytoplasm. This is an uncharacterized protein from Schizosaccharomyces pombe (strain 972 / ATCC 24843) (Fission yeast).